The sequence spans 68 residues: Putative alpha-conotoxin Qc alphaL-1 (68 aa).

An N-terminal signal peptide occupies residues 1–21; it reads MGMRMMFTMFLLVVLATTVVS. The propeptide occupies 22–49; the sequence is INLDHAFDGRNAAANNKATDLMARTVRR. Cysteines 51 and 64 form a disulfide.

Belongs to the conotoxin A superfamily. As to expression, expressed by the venom duct.

It localises to the secreted. Alpha-conotoxins act on postsynaptic membranes, they bind to the nicotinic acetylcholine receptors (nAChR) and thus inhibit them. This Conus quercinus (Oak cone) protein is Putative alpha-conotoxin Qc alphaL-1.